The following is a 226-amino-acid chain: Enolase-phosphatase E1 (226 aa).

This sequence belongs to the HAD-like hydrolase superfamily. MasA/MtnC family. As to quaternary structure, monomer. The cofactor is Mg(2+).

It carries out the reaction 5-methylsulfanyl-2,3-dioxopentyl phosphate + H2O = 1,2-dihydroxy-5-(methylsulfanyl)pent-1-en-3-one + phosphate. It participates in amino-acid biosynthesis; L-methionine biosynthesis via salvage pathway; L-methionine from S-methyl-5-thio-alpha-D-ribose 1-phosphate: step 3/6. It functions in the pathway amino-acid biosynthesis; L-methionine biosynthesis via salvage pathway; L-methionine from S-methyl-5-thio-alpha-D-ribose 1-phosphate: step 4/6. Functionally, bifunctional enzyme that catalyzes the enolization of 2,3-diketo-5-methylthiopentyl-1-phosphate (DK-MTP-1-P) into the intermediate 2-hydroxy-3-keto-5-methylthiopentenyl-1-phosphate (HK-MTPenyl-1-P), which is then dephosphorylated to form the acireductone 1,2-dihydroxy-3-keto-5-methylthiopentene (DHK-MTPene). In Shewanella sp. (strain MR-4), this protein is Enolase-phosphatase E1.